Here is a 313-residue protein sequence, read N- to C-terminus: MGESMTWVQALVLGLVQGLTEFLPISSSAHLRIVSSVFFGEDAGASFTAVTQLGTEAAVLVYFAKDIWRILVAWTTTLWDKARAATGPRVPIHDRPTTRLPVLTADNEHRFAAEAQRELDYRIGWYVIIATIPIGVLGFLFKDEIRTGARNLWLVSFMLIAFALVIAAAEHYGAKRRPIEQLTTRDGLVMGFAQCLALIPGVSRSGATSSAGLFLGLEREAAVRFSFLLAIPAVTASGLFSLPDAFEPAGEGLNASGPQLLVATIVSFVVGYASVAWLLKFVARHSLNWFVGYRIVLGLVIMGLLGAGVISAT.

The next 6 membrane-spanning stretches (helical) occupy residues 121–141 (YRIG…GFLF), 152–172 (LWLV…AEHY), 187–207 (GLVM…RSGA), 225–245 (FSFL…LPDA), 259–279 (QLLV…AWLL), and 290–310 (FVGY…AGVI).

Belongs to the UppP family.

The protein resides in the cell membrane. The catalysed reaction is di-trans,octa-cis-undecaprenyl diphosphate + H2O = di-trans,octa-cis-undecaprenyl phosphate + phosphate + H(+). Its function is as follows. Catalyzes the dephosphorylation of undecaprenyl diphosphate (UPP). Confers resistance to bacitracin. This chain is Undecaprenyl-diphosphatase, found in Nocardia farcinica (strain IFM 10152).